The chain runs to 463 residues: Eukaryotic translation initiation factor 3 subunit E (463 aa).

One can recognise a PCI domain in the interval 224-407 (FNLGENQGCQ…NMLHITRPHA (184 aa)). Residues 432–463 (QSSVGEPRERGERGERGNKGGRGRPRTQEVAA) are disordered. Residues 437-449 (EPRERGERGERGN) are compositionally biased toward basic and acidic residues.

Belongs to the eIF-3 subunit E family. Component of the eukaryotic translation initiation factor 3 (eIF-3) complex.

The protein resides in the cytoplasm. Component of the eukaryotic translation initiation factor 3 (eIF-3) complex, which is involved in protein synthesis of a specialized repertoire of mRNAs and, together with other initiation factors, stimulates binding of mRNA and methionyl-tRNAi to the 40S ribosome. The eIF-3 complex specifically targets and initiates translation of a subset of mRNAs involved in cell proliferation. The chain is Eukaryotic translation initiation factor 3 subunit E from Cryptococcus neoformans var. neoformans serotype D (strain JEC21 / ATCC MYA-565) (Filobasidiella neoformans).